A 557-amino-acid polypeptide reads, in one-letter code: uncharacterized protein (557 aa).

Residues 2–45 (NEDETSILNKKMEKIEVEMAEFERLGAEREKEAVERIVQEENQN) adopt a coiled-coil conformation. Disordered regions lie at residues 39 to 62 (VQEE…KSRK), 101 to 127 (NRTY…RKNF), 356 to 402 (PSPS…YPSN), and 536 to 557 (ANAT…YDHI). Composition is skewed to polar residues over residues 101-110 (NRTYYKNSQG), 358-380 (PSFQ…SSNA), 390-400 (DSATYPTSIYP), and 536-548 (ANAT…NLDT).

The protein resides in the cytoplasm. Its subcellular location is the nucleus. This is an uncharacterized protein from Schizosaccharomyces pombe (strain 972 / ATCC 24843) (Fission yeast).